A 280-amino-acid chain; its full sequence is Adenosylcobinamide-GDP ribazoletransferase (280 aa).

6 consecutive transmembrane segments (helical) span residues 44-64 (GVGVLVGALVAAFTALLLFVL), 69-89 (STPLVAAALGTALGVLLTGAF), 111-131 (LVIMKDSRVGAFGAIAVMLAL), 135-155 (VALLALLGAVSATLMVAALFV), 189-209 (ISVAALLTGFIWCFMALALVI), and 226-246 (ALLQALLSAVVASCVAWAVMA).

This sequence belongs to the CobS family. Requires Mg(2+) as cofactor.

It localises to the cell inner membrane. It catalyses the reaction alpha-ribazole + adenosylcob(III)inamide-GDP = adenosylcob(III)alamin + GMP + H(+). It carries out the reaction alpha-ribazole 5'-phosphate + adenosylcob(III)inamide-GDP = adenosylcob(III)alamin 5'-phosphate + GMP + H(+). It functions in the pathway cofactor biosynthesis; adenosylcobalamin biosynthesis; adenosylcobalamin from cob(II)yrinate a,c-diamide: step 7/7. Functionally, joins adenosylcobinamide-GDP and alpha-ribazole to generate adenosylcobalamin (Ado-cobalamin). Also synthesizes adenosylcobalamin 5'-phosphate from adenosylcobinamide-GDP and alpha-ribazole 5'-phosphate. This chain is Adenosylcobinamide-GDP ribazoletransferase, found in Albidiferax ferrireducens (strain ATCC BAA-621 / DSM 15236 / T118) (Rhodoferax ferrireducens).